The chain runs to 154 residues: Fibroblast growth factor 2 (154 aa).

A propeptide spanning residues 1–9 (MAASGITSL) is cleaved from the precursor. Asn-35 contacts heparin. Tyr-81 is subject to Phosphotyrosine; by TEC. Residue Lys-94 forms a Glycyl lysine isopeptide (Lys-Gly) (interchain with G-Cter in SUMO1) linkage. The interval 127–143 (KRTGQYKLGSKTGPGQK) is heparin-binding.

It belongs to the heparin-binding growth factors family. Monomer. Homodimer. Interacts with FGFR1, FGFR2, FGFR3 and FGFR4. Affinity between fibroblast growth factors (FGFs) and their receptors is increased by heparan sulfate glycosaminoglycans that function as coreceptors. Interacts with CSPG4, FGFBP1 and TEC. Found in a complex with FGFBP1, FGF1 and FGF2. Interacts with FGFBP3. Interacts with integrin ITGAV:ITGB3; the interaction is required for FGF2 signaling. Interacts with SNORC (via the extracellular domain). Interacts with glypican GPC3. Post-translationally, phosphorylation at Tyr-81 regulates FGF2 unconventional secretion.

The protein resides in the secreted. The protein localises to the nucleus. Functionally, acts as a ligand for FGFR1, FGFR2, FGFR3 and FGFR4. Also acts as an integrin ligand which is required for FGF2 signaling. Binds to integrin ITGAV:ITGB3. Plays an important role in the regulation of cell survival, cell division, cell differentiation and cell migration. Functions as a potent mitogen in vitro. Can induce angiogenesis. Mediates phosphorylation of ERK1/2 and thereby promotes retinal lens fiber differentiation. In Mus musculus (Mouse), this protein is Fibroblast growth factor 2 (Fgf2).